A 250-amino-acid chain; its full sequence is MWRLLSPTALLLLVSAGTRAADLSKAMVVLEPEWNRVLVSDGVILKCEGAYPPGDNSAQWWHNGSVIPHRAPSYSIEAARSEDSGEYKCQTGLSEASDPVQLEVHTGWLLLQAPRWVFQEGDTIQLRCHSWKNKTVQKVQYFQDGRGKMFFHKNSDFYIPKATSKHSGSYFCRGLIGNKNESSEAVNITVQGPPVPSTSTFLPHWYQIAFFLVTALLFVVDTGLHVAVQRDLQSSVKEWKDGKVTWSHGP.

Positions 1–20 are cleaved as a signal peptide; sequence MWRLLSPTALLLLVSAGTRA. At 21–207 the chain is on the extracellular side; the sequence is ADLSKAMVVL…TSTFLPHWYQ (187 aa). 2 consecutive Ig-like C2-type domains span residues 32–105 and 120–189; these read PEWN…LEVH and EGDT…VNIT. 2 disulfide bridges follow: C47-C89 and C128-C172. N-linked (GlcNAc...) asparagine glycosylation is found at N63, N133, N180, and N187. A helical transmembrane segment spans residues 208 to 228; the sequence is IAFFLVTALLFVVDTGLHVAV. Residues 229–250 are Cytoplasmic-facing; the sequence is QRDLQSSVKEWKDGKVTWSHGP.

In terms of assembly, forms a heterooligomeric complex with ITAM-containing signaling subunits FCER1G. Interacts (via transmembrane domain) with signaling subunits; this interaction is a prerequisite for receptor complex expression on the cell surface and intracellular signal transduction. Binds the Fc region of antigen-complexed IgG.

The protein resides in the cell membrane. Its function is as follows. Receptor for the invariable Fc fragment of immunoglobulin gamma (IgG). Optimally activated upon binding of clustered antigen-IgG complexes displayed on cell surfaces, triggers lysis of antibody-coated cells, a process known as antibody-dependent cellular cytotoxicity (ADCC). Does not bind free monomeric IgG, thus avoiding inappropriate effector cell activation in the absence of antigenic trigger. Mediates IgG effector functions on natural killer (NK) cells. Binds antigen-IgG complexes generated upon infection and triggers NK cell-dependent cytokine production and degranulation to limit viral load and propagation. Fc-binding subunit that associates with FCER1G adapter to form functional signaling complexes. Following the engagement of antigen-IgG complexes, triggers phosphorylation of immunoreceptor tyrosine-based activation motif (ITAM)-containing adapter with subsequent activation of phosphatidylinositol 3-kinase signaling and sustained elevation of intracellular calcium that ultimately drive NK cell activation. Mediates enhanced ADCC in response to afucosylated IgGs. The sequence is that of Low affinity immunoglobulin gamma Fc region receptor III-A from Felis catus (Cat).